Reading from the N-terminus, the 369-residue chain is N-methyltransferase imqF (369 aa).

The protein belongs to the methyltransferase superfamily.

It participates in secondary metabolite biosynthesis. Its function is as follows. N-methyltransferase; part of the gene cluster that mediates the biosynthesis of imizoquins A to D, tripeptide-derived alkaloids that serve a protective role against oxidative stress that are essential for normal germination. ImqB is a canonical three-module NRPS that assembles the tripeptide backbone of the imizoquins via condensation of Trp, Tyr, and Leu-derived precursors. N-methylation by imqF and phenol oxidation by imqC, followed by cyclization via the FAD-dependent oxidase imqH carry out the three-step transformation of L-tyrosine into tetrahydroisoquinoline. Importantly, this sequence requires the presence of a free amine in the tyrosine moiety, indicating that isoquinoline formation occurs prior to peptide bond formation. The imidazolidin-4-one ring of imizoquins could form following additional oxidation of the methyl-derived bridgehead carbon by imqH. Lastly, O-methylation by imqG and leucine hydroxylation by imqE complete biosynthesis of the imizoquins. This Aspergillus flavus (strain ATCC 200026 / FGSC A1120 / IAM 13836 / NRRL 3357 / JCM 12722 / SRRC 167) protein is N-methyltransferase imqF.